The chain runs to 288 residues: 4-diphosphocytidyl-2-C-methyl-D-erythritol kinase (288 aa).

K11 is an active-site residue. ATP is bound at residue 100-110; that stretch reads PIAAGLGSGSS. D140 is a catalytic residue.

The protein belongs to the GHMP kinase family. IspE subfamily.

The catalysed reaction is 4-CDP-2-C-methyl-D-erythritol + ATP = 4-CDP-2-C-methyl-D-erythritol 2-phosphate + ADP + H(+). It functions in the pathway isoprenoid biosynthesis; isopentenyl diphosphate biosynthesis via DXP pathway; isopentenyl diphosphate from 1-deoxy-D-xylulose 5-phosphate: step 3/6. Its function is as follows. Catalyzes the phosphorylation of the position 2 hydroxy group of 4-diphosphocytidyl-2C-methyl-D-erythritol. The chain is 4-diphosphocytidyl-2-C-methyl-D-erythritol kinase from Wolbachia pipientis wMel.